The following is a 288-amino-acid chain: Acetylglutamate kinase (288 aa).

Substrate is bound by residues 73–74 (GG), Arg95, and Asn186.

The protein belongs to the acetylglutamate kinase family. ArgB subfamily.

It localises to the cytoplasm. The catalysed reaction is N-acetyl-L-glutamate + ATP = N-acetyl-L-glutamyl 5-phosphate + ADP. It functions in the pathway amino-acid biosynthesis; L-arginine biosynthesis; N(2)-acetyl-L-ornithine from L-glutamate: step 2/4. Functionally, catalyzes the ATP-dependent phosphorylation of N-acetyl-L-glutamate. In Pelagibacter ubique (strain HTCC1062), this protein is Acetylglutamate kinase.